We begin with the raw amino-acid sequence, 157 residues long: Transcription elongation factor GreA (157 aa).

It belongs to the GreA/GreB family.

Functionally, necessary for efficient RNA polymerase transcription elongation past template-encoded arresting sites. The arresting sites in DNA have the property of trapping a certain fraction of elongating RNA polymerases that pass through, resulting in locked ternary complexes. Cleavage of the nascent transcript by cleavage factors such as GreA or GreB allows the resumption of elongation from the new 3'terminus. GreA releases sequences of 2 to 3 nucleotides. This Bartonella henselae (strain ATCC 49882 / DSM 28221 / CCUG 30454 / Houston 1) (Rochalimaea henselae) protein is Transcription elongation factor GreA.